The sequence spans 611 residues: Dihydroxy-acid dehydratase (611 aa).

Residue Asp82 participates in Mg(2+) binding. Cys123 is a [2Fe-2S] cluster binding site. Residues Asp124 and Lys125 each coordinate Mg(2+). Lys125 bears the N6-carboxylysine mark. [2Fe-2S] cluster is bound at residue Cys192. Mg(2+) is bound at residue Glu489. Catalysis depends on Ser515, which acts as the Proton acceptor. Residues 565 to 574 are compositionally biased toward basic and acidic residues; that stretch reads ERRKAEEARG. Residues 565–586 form a disordered region; sequence ERRKAEEARGKKAFTPPTRQRE.

The protein belongs to the IlvD/Edd family. In terms of assembly, homodimer. It depends on [2Fe-2S] cluster as a cofactor. Mg(2+) is required as a cofactor.

The catalysed reaction is (2R)-2,3-dihydroxy-3-methylbutanoate = 3-methyl-2-oxobutanoate + H2O. It catalyses the reaction (2R,3R)-2,3-dihydroxy-3-methylpentanoate = (S)-3-methyl-2-oxopentanoate + H2O. Its pathway is amino-acid biosynthesis; L-isoleucine biosynthesis; L-isoleucine from 2-oxobutanoate: step 3/4. The protein operates within amino-acid biosynthesis; L-valine biosynthesis; L-valine from pyruvate: step 3/4. Its function is as follows. Functions in the biosynthesis of branched-chain amino acids. Catalyzes the dehydration of (2R,3R)-2,3-dihydroxy-3-methylpentanoate (2,3-dihydroxy-3-methylvalerate) into 2-oxo-3-methylpentanoate (2-oxo-3-methylvalerate) and of (2R)-2,3-dihydroxy-3-methylbutanoate (2,3-dihydroxyisovalerate) into 2-oxo-3-methylbutanoate (2-oxoisovalerate), the penultimate precursor to L-isoleucine and L-valine, respectively. This is Dihydroxy-acid dehydratase from Parabacteroides distasonis (strain ATCC 8503 / DSM 20701 / CIP 104284 / JCM 5825 / NCTC 11152).